We begin with the raw amino-acid sequence, 152 residues long: UPF0756 membrane protein Daud_1310 (152 aa).

The next 4 membrane-spanning stretches (helical) occupy residues 14–34 (LVGV…LLFI), 51–71 (LELG…NGKI), 76–96 (IIYN…ALAT), and 112–132 (IIFG…GMPV).

The protein belongs to the UPF0756 family.

It localises to the cell membrane. In Desulforudis audaxviator (strain MP104C), this protein is UPF0756 membrane protein Daud_1310.